The chain runs to 155 residues: SsrA-binding protein (155 aa).

The protein belongs to the SmpB family.

It localises to the cytoplasm. In terms of biological role, required for rescue of stalled ribosomes mediated by trans-translation. Binds to transfer-messenger RNA (tmRNA), required for stable association of tmRNA with ribosomes. tmRNA and SmpB together mimic tRNA shape, replacing the anticodon stem-loop with SmpB. tmRNA is encoded by the ssrA gene; the 2 termini fold to resemble tRNA(Ala) and it encodes a 'tag peptide', a short internal open reading frame. During trans-translation Ala-aminoacylated tmRNA acts like a tRNA, entering the A-site of stalled ribosomes, displacing the stalled mRNA. The ribosome then switches to translate the ORF on the tmRNA; the nascent peptide is terminated with the 'tag peptide' encoded by the tmRNA and targeted for degradation. The ribosome is freed to recommence translation, which seems to be the essential function of trans-translation. The polypeptide is SsrA-binding protein (Streptococcus equi subsp. zooepidemicus (strain H70)).